The primary structure comprises 483 residues: MKTLNRRDFPGAQYPERIIQFGEGNFLRAFVDWQIDLLNEHTDLNSGVVVVRPIETSFPPSLSTQDGLYTTIIRGLNEKGEAVSDARLIRSVNREISVYSEYDEFLKLAHNPEMRFVFSNTTEAGISYHAGDKFDDAPAVSYPAKLTRLLFERFSHFNGALDKGWIIIPCELIDYNGDALRELVLRYAQEWALPEAFIQWLDQANSFCSTLVDRIVTGYPRDEVAKLEEELGYHDGFLDTAEHFYLFVIQGPKSLATELRLDKYPLNVLIVDDIKPYKERKVAILNGAHTALVPVAFQAGLDTVGEAMNDAEICAFVEKAIYEEIIPVLDLPRDELESFASAVTGRFRNPYIKHQLLSIALNGMTKFRTRILPQLLAGQKANGTLPARLTFALAALIAFYRGERNGETYPVQDDAHWLERYQQLWSQYRDRVIGTQELVAIVLAEKDHWEQDLTQVPGLVEQVANDLDAILEKGMREAVRPLC.

An NAD(+)-binding site is contributed by 18–29 (IIQFGEGNFLRA).

It belongs to the mannitol dehydrogenase family. UxaB subfamily.

It catalyses the reaction D-altronate + NAD(+) = keto-D-tagaturonate + NADH + H(+). It participates in carbohydrate metabolism; pentose and glucuronate interconversion. The chain is Altronate oxidoreductase from Escherichia coli O1:K1 / APEC.